The following is a 447-amino-acid chain: N-succinylarginine dihydrolase (447 aa).

Residues 19–28 (AGLSFGNEAS), Asn-110, and 137–138 (HR) contribute to the substrate site. Glu-174 is an active-site residue. Residue Arg-213 coordinates substrate. The active site involves His-249. Residues Asp-251 and Asn-364 each contribute to the substrate site. Residue Cys-370 is the Nucleophile of the active site.

The protein belongs to the succinylarginine dihydrolase family. Homodimer.

It catalyses the reaction N(2)-succinyl-L-arginine + 2 H2O + 2 H(+) = N(2)-succinyl-L-ornithine + 2 NH4(+) + CO2. It participates in amino-acid degradation; L-arginine degradation via AST pathway; L-glutamate and succinate from L-arginine: step 2/5. Functionally, catalyzes the hydrolysis of N(2)-succinylarginine into N(2)-succinylornithine, ammonia and CO(2). The sequence is that of N-succinylarginine dihydrolase from Yersinia pestis bv. Antiqua (strain Antiqua).